Consider the following 299-residue polypeptide: Glutamyl-Q tRNA(Asp) synthetase (299 aa).

L-glutamate-binding positions include 9-13 (RFAPS) and Glu-45. A 'HIGH' region motif is present at residues 12 to 22 (PSPTGPLHFGS). 3 residues coordinate Zn(2+): Cys-101, Cys-103, and Cys-118. L-glutamate contacts are provided by Tyr-170 and Arg-188. A 'KMSKS' region motif is present at residues 226-230 (KLSKS). Lys-229 contacts ATP.

Belongs to the class-I aminoacyl-tRNA synthetase family. GluQ subfamily. Zn(2+) is required as a cofactor.

Catalyzes the tRNA-independent activation of glutamate in presence of ATP and the subsequent transfer of glutamate onto a tRNA(Asp). Glutamate is transferred on the 2-amino-5-(4,5-dihydroxy-2-cyclopenten-1-yl) moiety of the queuosine in the wobble position of the QUC anticodon. The sequence is that of Glutamyl-Q tRNA(Asp) synthetase from Xanthomonas axonopodis pv. citri (strain 306).